A 463-amino-acid chain; its full sequence is Zinc finger protein PLAGL1 (463 aa).

C2H2-type zinc fingers lie at residues 4–26 (YPCQLCGKTFLTLEKFTIHNYSH), 32–56 (YKCLQPDCGKAFISRYKLMRHMATH), 62–84 (HQCAHCEKTFNRKDHLKNHLQTH), 91–113 (FGCEECGKKYNTMLGYKRHLALH), 120–142 (LTCGVCALELGSTEVLLDHLKAH), 156–178 (HQCDHCERCFYTRKDVRRHLVVH), and 184–207 (FLCQFCAQRFGRKDHLTRHTKKTH). Residues 285-310 (LHPVAPPTSPPQPLQNHKYNTSSTSY) are disordered. Residues 287–297 (PVAPPTSPPQP) show a composition bias toward pro residues. Residues 298–310 (LQNHKYNTSSTSY) are compositionally biased toward polar residues.

This sequence belongs to the krueppel C2H2-type zinc-finger protein family. In terms of assembly, interacts with THRSP.

The protein localises to the nucleus. Functionally, acts as a transcriptional activator. Involved in the transcriptional regulation of type 1 receptor for pituitary adenylate cyclase-activating polypeptide. The polypeptide is Zinc finger protein PLAGL1 (PLAGL1) (Sus scrofa (Pig)).